The following is a 582-amino-acid chain: MLDRRIFSDPNGNEVRWVVGSAWPYIYAVPHLGNLIGSLLSADVFTRYLKLKGYDVVFVTGSDEHGTPIEVEAIKLGIEPRQLTDRMHEIIVKLLKLWGIEPDNYTRTESEVHKWYVRDAFTKIYNNGYIFTKDDELPYCPRDKIFLPDRFVIGTCPYCGYPYARGDQCENCGRLLEPRMLINPKCAICGSTPEWRLTRHWYLDLRRLEDRIRSYIEGNSALPDNAKQMSLGILKEGLRPRAITRDNKWGIPAPFPGAEGKTIYVWFEAVLGYVSATIEYFRRLGREDDWRRFWFNKGTRVVFFIGKDNIPFHTIIFPALLMATGEDYVMPWTTSSTEYLIFEGKKFSKSQRVGIWADEAIALLPADYWRFYLIYNRPEQRDSNFTWDSFLDVVNSIMNDTVGNFIHRVLTLAKRRWGTVPGDVKMIEQDQEIYGKVLEILNTVEEDYERIMLKDAVSQSIEIARIGNKYLNERQPWRLSEVEFNSAIYMLMSIVKTLSITLAPVIPFSINELWRMMGYSNGLRWGDARKPIEQGLRLSEPKPLFRKISKEELNVMLKKLDEIRDIKDKGKYPWEQAYLPNP.

The 'HIGH' region signature appears at 24 to 34 (PYIYAVPHLGN). Zn(2+) contacts are provided by C156, C159, C169, and C172. The 'KMSKS' region signature appears at 346 to 350 (KFSKS). An ATP-binding site is contributed by K349.

This sequence belongs to the class-I aminoacyl-tRNA synthetase family. MetG type 1 subfamily. Zn(2+) is required as a cofactor.

The protein resides in the cytoplasm. The catalysed reaction is tRNA(Met) + L-methionine + ATP = L-methionyl-tRNA(Met) + AMP + diphosphate. Is required not only for elongation of protein synthesis but also for the initiation of all mRNA translation through initiator tRNA(fMet) aminoacylation. This Caldivirga maquilingensis (strain ATCC 700844 / DSM 13496 / JCM 10307 / IC-167) protein is Methionine--tRNA ligase.